The following is a 212-amino-acid chain: Thymidylate kinase (212 aa).

An ATP-binding site is contributed by glycine 10 to threonine 17.

It belongs to the thymidylate kinase family.

The catalysed reaction is dTMP + ATP = dTDP + ADP. Functionally, phosphorylation of dTMP to form dTDP in both de novo and salvage pathways of dTTP synthesis. The protein is Thymidylate kinase of Exiguobacterium sibiricum (strain DSM 17290 / CCUG 55495 / CIP 109462 / JCM 13490 / 255-15).